Here is a 131-residue protein sequence, read N- to C-terminus: Single-stranded DNA-binding protein 2 (131 aa).

Residues 1–103 enclose the SSB domain; the sequence is MYNKVIMIGR…VLASSFQLLE (103 aa). The short motif at 126–131 is the Important for interaction with partner proteins element; it reads EEELPF.

As to quaternary structure, homotetramer.

Plays an important role in DNA replication, recombination and repair. Binds to ssDNA and to an array of partner proteins to recruit them to their sites of action during DNA metabolism. The chain is Single-stranded DNA-binding protein 2 (ssb2) from Streptococcus agalactiae serotype III (strain NEM316).